The sequence spans 400 residues: Phosphoglycerate kinase (400 aa).

Residues 24–26 (DFN), arginine 40, 63–66 (HFGR), arginine 121, and arginine 154 contribute to the substrate site. ATP contacts are provided by residues lysine 205, glycine 296, glutamate 327, and 356 to 359 (GGDS).

It belongs to the phosphoglycerate kinase family. As to quaternary structure, monomer.

Its subcellular location is the cytoplasm. The catalysed reaction is (2R)-3-phosphoglycerate + ATP = (2R)-3-phospho-glyceroyl phosphate + ADP. The protein operates within carbohydrate degradation; glycolysis; pyruvate from D-glyceraldehyde 3-phosphate: step 2/5. The protein is Phosphoglycerate kinase of Nostoc punctiforme (strain ATCC 29133 / PCC 73102).